Reading from the N-terminus, the 359-residue chain is Protein Wnt-5b (359 aa).

A signal peptide spans 1–17 (MPSLLLLFTAALLSSWA). Cys83 and Cys94 form a disulfide bridge. Asn93 and Asn99 each carry an N-linked (GlcNAc...) asparagine glycan. 10 cysteine pairs are disulfide-bonded: Cys133–Cys141, Cys143–Cys161, Cys217–Cys231, Cys219–Cys226, Cys288–Cys319, Cys304–Cys314, Cys318–Cys358, Cys334–Cys349, Cys336–Cys346, and Cys341–Cys342. Ser223 is lipidated: O-palmitoleoyl serine; by PORCN. Asn291 and Asn305 each carry an N-linked (GlcNAc...) asparagine glycan.

This sequence belongs to the Wnt family. As to quaternary structure, interacts with PORCN. Palmitoleoylation is required for efficient binding to frizzled receptors. Depalmitoleoylation leads to Wnt signaling pathway inhibition.

It localises to the secreted. It is found in the extracellular space. The protein localises to the extracellular matrix. Ligand for members of the frizzled family of seven transmembrane receptors. Probable developmental protein. May be a signaling molecule which affects the development of discrete regions of tissues. Is likely to signal over only few cell diameters. The protein is Protein Wnt-5b (WNT5B) of Homo sapiens (Human).